Reading from the N-terminus, the 331-residue chain is MLSLFNIALKALIMKHNVEFLKRDKEILTHLGLCCKDYVIIDKCSECGNICPNGQQHGDTCININYLLIYAVKRDNYMLAYRLLSWGANEKFANCFRRPLPNLKPPLPKKELTPKEIKQLAYDHFHNDSELITIFEVFRKCRHINDCLNFFYKKNTEFEIYFARLHVYSKTFYGKGWYWFCIFIAVKHSMEHALKKITKTFTPTFYNKTTLNLVLFLSACFYENVEWMKNFFYKGNKKIQQRMLNYGMEWAATHGKVRTFICCYTLGGTASLKLYQKAYQNEKFMIMALCSYLGNIQINNPWESLNPYTMVQNKEKFLPLKFSEETQYFYI.

This sequence belongs to the asfivirus MGF 300 family.

This is Protein MGF 300-4L from African swine fever virus (isolate Tick/Malawi/Lil 20-1/1983) (ASFV).